A 492-amino-acid chain; its full sequence is Excitatory amino acid transporter (492 aa).

The Cytoplasmic segment spans residues 1-7 (MVSWIRK). The next 3 membrane-spanning stretches (helical) occupy residues 8 to 28 (NLLL…GFLL), 47 to 67 (LLMH…LISG), and 85 to 105 (TYYM…VLVI). At 106–191 (HPGDPTIKKE…VKASVEYTSG (86 aa)) the chain is on the extracellular side. Asn-166 and Asn-176 each carry an N-linked (GlcNAc...) asparagine glycan. Transmembrane regions (helical) follow at residues 192–212 (MNVL…SQLG), 228–248 (VIMK…LCLI), 270–290 (VTVL…IFFV), 358–378 (AVAA…GQVV), and 389–409 (IGAA…LTAV).

This sequence belongs to the dicarboxylate/amino acid:cation symporter (DAACS) (TC 2.A.23) family.

The protein localises to the membrane. Its function is as follows. Transports L-glutamate and also L- and D-aspartate. Essential for terminating the postsynaptic action of glutamate by rapidly removing released glutamate from the synaptic cleft. Acts as a symport by cotransporting sodium. This is Excitatory amino acid transporter (GLT-1) from Onchocerca volvulus.